The following is a 450-amino-acid chain: MSCLMVERCGEILFENPDQNAKCVCMLGDIRLRGQTGVRAERRGSYPFIDFRLLNSTTYSGEIGTKKKVKRLLSFQRYFHASRLLRGIIPQAPLHLLDEDYLGQARHMLSKVGMWDFDIFLFDRLTNGNSLVTLLCHLFNTHGLIHHFKLDMVTLHRFLVMVQEDYHSQNPYHNAVHAADVTQAMHCYLKEPKLASFLTPLDIMLGLLAAAAHDVDHPGVNQPFLIKTNHHLANLYQNMSVLENHHWRSTIGMLRESRLLAHLPKEMTQDIEQQLGSLILATDINRQNEFLTRLKAHLHNKDLRLEDAQDRHFMLQIALKCADICNPCRIWEMSKQWSERVCEEFYRQGELEQKFELEISPLCNQQKDSIPSIQIGFMSYIVEPLFREWAHFTGNSTLSENMLGHLAHNKAQWKSLLPRQHRSRGSSGSGPDHDHAGQGTESEEQEGDSP.

Positions leucine 97 to glutamine 420 constitute a PDEase domain. The active-site Proton donor is the histidine 173. Residues histidine 177, histidine 213, aspartate 214, and aspartate 323 each contribute to the a divalent metal cation site. A disordered region spans residues proline 418–proline 450. Phosphoserine is present on serine 426. Acidic residues predominate over residues glutamate 441–proline 450.

It belongs to the cyclic nucleotide phosphodiesterase family. PDE7 subfamily. The cofactor is a divalent metal cation. Highly expressed in brain. Also expressed in heart, liver, skeletal muscle and pancreas.

It carries out the reaction 3',5'-cyclic AMP + H2O = AMP + H(+). Its pathway is purine metabolism; 3',5'-cyclic AMP degradation; AMP from 3',5'-cyclic AMP: step 1/1. With respect to regulation, inhibited by dipyridamole, IBMX and SCH 51866. Insensitive to zaprinast, rolipram, and milrinone. Hydrolyzes the second messenger cAMP, which is a key regulator of many important physiological processes. May be involved in the control of cAMP-mediated neural activity and cAMP metabolism in the brain. This chain is 3',5'-cyclic-AMP phosphodiesterase 7B, found in Homo sapiens (Human).